The primary structure comprises 487 residues: Ribosomal protein uS12 methylthiotransferase RimO (487 aa).

In terms of domain architecture, MTTase N-terminal spans 38–149; sequence PTVAFAHLGC…IVEVLEQVEA (112 aa). [4Fe-4S] cluster-binding residues include Cys47, Cys83, Cys112, Cys187, Cys191, and Cys194. Residues 173–402 enclose the Radical SAM core domain; the sequence is TTSEAVAYLK…MEAQQAISAE (230 aa). A TRAM domain is found at 405–476; sequence GAWVGRIVDV…IYDLEGEVVG (72 aa).

This sequence belongs to the methylthiotransferase family. RimO subfamily. The cofactor is [4Fe-4S] cluster.

It localises to the cytoplasm. The enzyme catalyses L-aspartate(89)-[ribosomal protein uS12]-hydrogen + (sulfur carrier)-SH + AH2 + 2 S-adenosyl-L-methionine = 3-methylsulfanyl-L-aspartate(89)-[ribosomal protein uS12]-hydrogen + (sulfur carrier)-H + 5'-deoxyadenosine + L-methionine + A + S-adenosyl-L-homocysteine + 2 H(+). Its function is as follows. Catalyzes the methylthiolation of an aspartic acid residue of ribosomal protein uS12. This Synechococcus sp. (strain RCC307) protein is Ribosomal protein uS12 methylthiotransferase RimO.